The chain runs to 432 residues: FAD-dependent monooxygenase pynG (432 aa).

The FAD site is built by glutamate 32, arginine 103, aspartate 315, and alanine 328.

It belongs to the paxM FAD-dependent monooxygenase family. It depends on FAD as a cofactor.

It functions in the pathway secondary metabolite biosynthesis. Its function is as follows. FAD-dependent monooxygenase; part of the gene cluster that mediates the biosynthesis of pyranonigrins, a family of antioxidative compounds. The first step of pyranonigrins biosynthesis is performed by the hybrid PKS-NRPS synthetase that condenses 6 malonyl-CoA units to an acetyl starter unit, to form a 1,3,5-trioxotetradecane-6,8-dienyl-ACP. The enoyl reductase (ER) domain of pynA is likely to be functional during the first two rounds of polyketide chain extension, to generate the saturated C-C bonds of the alkyl side chain. PynA subsequently forms the amide bond between the acyl chain and L-serine. Although pynA has a terminal reductase domain, it appears to require the thioesterase pynI for the release of the straight-chain intermediate from pynA via the formation of a tetramic acid pyranonigrin J. The methyltransferase pynC then coverts pyranonigrin J to pyranonigrin I via N-methylation. The FAD-dependent monooxygenase pynG catalyzes an epoxidation-mediated cyclization to form the dihydro-gamma-pyrone moiety, followed by pynD-catalyzed oxidation of the alcohol to the ketone and enolization to yield the characteristic tetramic acid-fused gamma-pyrone core of pyranonigrin H. Pyranonigrin H is substrate of pynH for dehydration-mediated exo-methylene formation from the serine side chain to produce pyranonigrin E, before the oxidase pynE reduces the exo-methylene of pyranonigrin E into a pendant methyl to form pyranonigrin G. The FAD-linked oxidoreductase pynB performs the reverse reaction and converts pyranonigrin G back to pyranonigrin E. This is FAD-dependent monooxygenase pynG from Aspergillus niger (strain ATCC MYA-4892 / CBS 513.88 / FGSC A1513).